The primary structure comprises 150 residues: UPF0178 protein PC1_0756 (150 aa).

Belongs to the UPF0178 family.

The chain is UPF0178 protein PC1_0756 from Pectobacterium carotovorum subsp. carotovorum (strain PC1).